The sequence spans 592 residues: Pyruvate decarboxylase 3 (592 aa).

Substrate is bound by residues Asp54 and His141. The thiamine pyrophosphate binding stretch occupies residues Asp419 to Ile501. Mg(2+) contacts are provided by Asp469, Asn496, and Gly498. Glu502 is a substrate binding site.

Belongs to the TPP enzyme family. As to quaternary structure, homotetramer. A metal cation is required as a cofactor. It depends on thiamine diphosphate as a cofactor. Expressed at low levels in roots and shoots.

The enzyme catalyses a 2-oxocarboxylate + H(+) = an aldehyde + CO2. The sequence is that of Pyruvate decarboxylase 3 (PDC3) from Arabidopsis thaliana (Mouse-ear cress).